The chain runs to 535 residues: Glucan 1,6-alpha-glucosidase (535 aa).

Asp-194 serves as the catalytic Nucleophile. Glu-236 serves as the catalytic Proton donor.

This sequence belongs to the glycosyl hydrolase 13 family.

The protein localises to the cytoplasm. The enzyme catalyses Hydrolysis of (1-&gt;6)-alpha-D-glucosidic linkages in (1-&gt;6)-alpha-D-glucans and derived oligosaccharides.. In terms of biological role, the physiological substrates may be short isomaltosaccharides. This is Glucan 1,6-alpha-glucosidase (dexB) from Streptococcus pneumoniae serotype 4 (strain ATCC BAA-334 / TIGR4).